The primary structure comprises 551 residues: Cytochrome P450 monooxygenase sdnQ (551 aa).

The disordered stretch occupies residues 1–23 (MDDPSIASGFQQGTGRTTGANGT). The span at 8 to 23 (SGFQQGTGRTTGANGT) shows a compositional bias: polar residues. Residue N21 is glycosylated (N-linked (GlcNAc...) asparagine). Residues 41–57 (CIGTSLLVALLTTIIIY) traverse the membrane as a helical segment. C491 serves as a coordination point for heme.

The protein belongs to the cytochrome P450 family. Requires heme as cofactor.

Its subcellular location is the membrane. The protein operates within antibiotic biosynthesis. In terms of biological role, cytochrome P450 monooxygenase; part of the gene cluster that mediates the biosynthesis of sordarin and hypoxysordarin, glycoside antibiotics with a unique tetracyclic diterpene aglycone structure. First, the geranylgeranyl diphosphate synthase sdnC constructs GGDP from farnesyl diphosphate and isopentenyl diphosphate. The diterpene cyclase sdnA then catalyzes the cyclization of GGDP to afford cycloaraneosene. Cycloaraneosene is then hydroxylated four times by the putative cytochrome P450 monooxygenases sdnB, sdnE, sdnF and sdnH to give a hydroxylated cycloaraneosene derivative such as cycloaraneosene-8,9,13,19-tetraol. Although the order of the hydroxylations is unclear, at least C8, C9 and C13 of the cycloaraneosene skeleton are hydroxylated before the sordaricin formation. Dehydration of the 13-hydroxy group of the hydroxylated cycloaraneosene derivative might be catalyzed by an unassigned hypothetical protein such as sdnG and sdnP to construct the cyclopentadiene moiety. The FAD-dependent oxidoreductase sdnN is proposed to catalyze the oxidation at C9 of the hydroxylated cycloaraneosene derivative and also catalyze the Baeyer-Villiger oxidation to give the lactone intermediate. The presumed lactone intermediate would be hydrolyzed to give an acrolein moiety and a carboxylate moiety. Then, [4+2]cycloaddition would occur between the acrolein moiety and the cyclopentadiene moiety to give sordaricin. SdnN might also be involved in the [4+2]cycloaddition after the hypothesized oxidation to accommodate the oxidized product and prompt the [4+2]cycloaddition. GDP-6-deoxy-D-altrose may be biosynthesized from GDP-D-mannose by the putative GDP-mannose-4,6-dehydratase sdnI and the short-chain dehydrogenase sdnK. The glycosyltransferase sdnJ catalyzes the attachment of 6-deoxy-D-altrose onto the 19-hydroxy group of sordaricin to give 4'-O-demethylsordarin. The methyltransferase sdnD would complete the biosynthesis of sordarin. Sordarin can be further modified into hypoxysordarin. The unique acyl chain at the 3'-hydroxy group of hypoxysordarin would be constructed by an iterative type I PKS sdnO and the trans-acting polyketide methyltransferase sdnL. SdnL would be responsible for the introduction of an alpha-methyl group of the polyketide chain. Alternatively, the beta-lactamase-like protein sdnR might be responsible for the cleavage and transfer of the polyketide chain from the PKS sdnO to sordarin. Two putative cytochrome P450 monooxygenases, sdnQ and sdnT, might catalyze the epoxidations of the polyketide chain to complete the biosynthesis of hypoxysordarin. Transcriptional regulators sdnM and sdnS are presumably encoded for the transcriptional regulation of the expression of the sdn gene cluster. The chain is Cytochrome P450 monooxygenase sdnQ from Sordaria araneosa (Pleurage araneosa).